The sequence spans 449 residues: MAKKVFVKTFGCQMNEYDSDKMVDVLNAAQGYEPTQDVEEADLILFNTCSVREKAQEKVFSDLGRIKHLKARGVKIGVGGCVASQEGDEIIKRAPYVDVVFGPQTLHRLPELLAQREALARPQVDISFPEIEKFDHLPPARVEGASAFVSIMEGCSKYCSYCVVPYTRGEEVSRPFDDVLVEVAGLADQGVKEVTLLGQNVNAYLGKMGGTAEVADFALLLEYVADITGIERIRFTTSHPNEFTQRLIDAYARIPKLVSHLHLPVQHGSDRILMAMKRGYTAMEYKSTIRKLRAIRPDLAMSSDFIVGFPGETEDDFGKMMKLIDDIHFDNSFSFIFSPRPGTPAASLHDDTPHEVKLRRLQELQAVINANIKSISESRVGTVQRILVEGASKRDGSELMGRTECNRVVNFAGHPRLVGQMVDVTITEAKAYTLRGEVVTADHGALAAH.

One can recognise an MTTase N-terminal domain in the interval Lys3–Ala118. Residues Cys12, Cys49, Cys81, Cys155, Cys159, and Cys162 each contribute to the [4Fe-4S] cluster site. Residues Arg141–Ser376 form the Radical SAM core domain. Residues Glu377–Thr440 enclose the TRAM domain.

Belongs to the methylthiotransferase family. MiaB subfamily. As to quaternary structure, monomer. [4Fe-4S] cluster serves as cofactor.

Its subcellular location is the cytoplasm. The enzyme catalyses N(6)-dimethylallyladenosine(37) in tRNA + (sulfur carrier)-SH + AH2 + 2 S-adenosyl-L-methionine = 2-methylsulfanyl-N(6)-dimethylallyladenosine(37) in tRNA + (sulfur carrier)-H + 5'-deoxyadenosine + L-methionine + A + S-adenosyl-L-homocysteine + 2 H(+). Its function is as follows. Catalyzes the methylthiolation of N6-(dimethylallyl)adenosine (i(6)A), leading to the formation of 2-methylthio-N6-(dimethylallyl)adenosine (ms(2)i(6)A) at position 37 in tRNAs that read codons beginning with uridine. The sequence is that of tRNA-2-methylthio-N(6)-dimethylallyladenosine synthase from Paracidovorax citrulli (strain AAC00-1) (Acidovorax citrulli).